Reading from the N-terminus, the 405-residue chain is MNASGSVPLGVDSEVGRLRSVILHRPGDELKRLTPRNNDELLFDALPWVDRAQEEHDQFATVLRERGVEVLLLSDLLTEALEVSGAARIQGIAAAVDARKIGHALGQHLAAYLRKVEPKELSSILTAGMTFDELPIDAGSTSLVRRMHHGGDFVIDPLPNLLFTRDSSFWVGPRVIITSLALSARARESSITDLVYAHHPRFKGVRRAYESHTAPVEGGDVLLLAPGVIAIGVGERTSPAGAEALARSVFDDGLAHTVLVVPIEQRRASMHLDTVCTMVEADAVVMYPAIQDTLAAFTLRKEDDGVSIRGATPFLEAAADAMGIGKLRVIDTGLDTVTAEREQWDDGNNTLAVEPGVVVAYERNVETNARLEASGIEVLRIAGSELGSGRGGPRCMSCPIARDPL.

Cysteine 395 functions as the Amidino-cysteine intermediate in the catalytic mechanism.

It belongs to the arginine deiminase family.

It localises to the cytoplasm. The catalysed reaction is L-arginine + H2O = L-citrulline + NH4(+). It participates in amino-acid degradation; L-arginine degradation via ADI pathway; carbamoyl phosphate from L-arginine: step 1/2. The polypeptide is Arginine deiminase (Rhodococcus erythropolis (strain PR4 / NBRC 100887)).